We begin with the raw amino-acid sequence, 441 residues long: Rho-associated protein kinase 1 (441 aa).

A coiled-coil region spans residues 1–99 (NSKSQMDKDY…RLEQEVNEHK (99 aa)). The segment at 114–353 (EAKSVAMCEM…TLSRLEETNS (240 aa)) is SHROOM3 binding. The 67-residue stretch at 356–422 (TKDIELLRKE…LAEIMNRKDF (67 aa)) folds into the RhoBD domain. The stretch at 418-441 (NRKDFKIDRKKANTQDLRKKKKKK) forms a coiled coil.

Belongs to the protein kinase superfamily. AGC Ser/Thr protein kinase family. As to quaternary structure, homodimer. Interacts with RHOA (activated by GTP), RHOB, RHOC, GEM, MYLC2B, RHOE, PPP1R12A, LIMK1, LIMK2, TSG101, CHORDC1, DAPK3, PFN1, PTEN and JIP3. Interacts with FHOD1 in a Src-dependent manner. Interacts with ITGB1BP1 (via N-terminus and PTB domain). Interacts with SHROOM3. Mg(2+) is required as a cofactor.

Its subcellular location is the cytoplasm. The protein resides in the golgi apparatus membrane. It is found in the cytoskeleton. The protein localises to the microtubule organizing center. It localises to the centrosome. Its subcellular location is the centriole. The protein resides in the cell projection. It is found in the bleb. The protein localises to the cell membrane. It localises to the lamellipodium. Its subcellular location is the ruffle. The enzyme catalyses L-seryl-[protein] + ATP = O-phospho-L-seryl-[protein] + ADP + H(+). It carries out the reaction L-threonyl-[protein] + ATP = O-phospho-L-threonyl-[protein] + ADP + H(+). Activated by RHOA binding. Inhibited by Y-27632. Its function is as follows. Protein kinase which is a key regulator of the actin cytoskeleton and cell polarity. Involved in regulation of smooth muscle contraction, actin cytoskeleton organization, stress fiber and focal adhesion formation, neurite retraction, cell adhesion and motility via phosphorylation of DAPK3, GFAP, LIMK1, LIMK2, MYL9/MLC2, TPPP, PFN1 and PPP1R12A. Phosphorylates FHOD1 and acts synergistically with it to promote SRC-dependent non-apoptotic plasma membrane blebbing. Phosphorylates JIP3 and regulates the recruitment of JNK to JIP3 upon UVB-induced stress. Acts as a suppressor of inflammatory cell migration by regulating PTEN phosphorylation and stability. Acts as a negative regulator of VEGF-induced angiogenic endothelial cell activation. Required for centrosome positioning and centrosome-dependent exit from mitosis. Plays a role in terminal erythroid differentiation. Inhibits podocyte motility via regulation of actin cytoskeletal dynamics and phosphorylation of CFL1. Promotes keratinocyte terminal differentiation. Involved in osteoblast compaction through the fibronectin fibrillogenesis cell-mediated matrix assembly process, essential for osteoblast mineralization. May regulate closure of the eyelids and ventral body wall by inducing the assembly of actomyosin bundles. The sequence is that of Rho-associated protein kinase 1 (ROCK1) from Bos taurus (Bovine).